Here is a 620-residue protein sequence, read N- to C-terminus: FAD-linked oxidoreductase notD (620 aa).

The N-terminal stretch at 1–21 (MHYIRELLIVVFTSCPALSYA) is a signal peptide. N-linked (GlcNAc...) asparagine glycosylation is found at Asn50, Asn86, and Asn109. Residues 124 to 313 (SQGRIPRYSA…TSVTMPVFGA (190 aa)) enclose the FAD-binding PCMH-type domain. An N-linked (GlcNAc...) asparagine glycan is attached at Asn403.

It belongs to the oxygen-dependent FAD-linked oxidoreductase family. Requires FAD as cofactor.

The protein operates within alkaloid biosynthesis. In terms of biological role, FAD-linked oxidoreductase; part of the gene cluster that mediates the biosynthesis of notoamide, a fungal indole alkaloid that belongs to a family of natural products containing a characteristic bicyclo[2.2.2]diazaoctane core. The first step of notoamide biosynthesis involves coupling of L-proline and L-tryptophan by the bimodular NRPS notE, to produce cyclo-L-tryptophan-L-proline called brevianamide F. The reverse prenyltransferase notF then acts as a deoxybrevianamide E synthase and converts brevianamide F to deoxybrevianamide E via reverse prenylation at C-2 of the indole ring leading to the bicyclo[2.2.2]diazaoctane core. Deoxybrevianamide E is further hydroxylated at C-6 of the indole ring, likely catalyzed by the cytochrome P450 monooxygenase notG, to yield 6-hydroxy-deoxybrevianamide E. 6-hydroxy-deoxybrevianamide E is a specific substrate of the prenyltransferase notC for normal prenylation at C-7 to produce 6-hydroxy-7-prenyl-deoxybrevianamide, also called notoamide S. As the proposed pivotal branching point in notoamide biosynthesis, notoamide S can be diverted to notoamide E through an oxidative pyran ring closure putatively catalyzed by either notH cytochrome P450 monooxygenase or the notD FAD-linked oxidoreductase. This step would be followed by an indole 2,3-epoxidation-initiated pinacol-like rearrangement catalyzed by the notB FAD-dependent monooxygenase leading to the formation of notoamide C and notoamide D. On the other hand notoamide S is converted to notoamide T by notH (or notD), a bifunctional oxidase that also functions as the intramolecular Diels-Alderase responsible for generation of (+)-notoamide T. To generate antipodal (-)-notoaminide T, notH' (or notD') in Aspergillus versicolor is expected to catalyze a Diels-Alder reaction leading to the opposite stereochemistry. The remaining oxidoreductase notD (or notH) likely catalyzes the oxidative pyran ring formation to yield (+)-stephacidin A. The FAD-dependent monooxygenase notI is highly similar to notB and is predicted to catalyze a similar conversion from (+)-stephacidin A to (-)-notoamide B via the 2,3-epoxidation of (+)-stephacidin A followed by a pinacol-type rearrangement. Finally, it remains unclear which enzyme could be responsible for the final hydroxylation steps leading to notoamide A and sclerotiamide. This chain is FAD-linked oxidoreductase notD, found in Aspergillus sp. (strain MF297-2).